We begin with the raw amino-acid sequence, 360 residues long: RGG repeats nuclear RNA binding protein B (360 aa).

2 disordered regions span residues 1–216 (MASV…DKEM) and 250–360 (MQQL…TLGK). Alanine 2 carries the N-acetylalanine modification. The segment covering 58–77 (PGGGRGAGRGGSYGRGGRGG) has biased composition (gly residues). Composition is skewed to basic and acidic residues over residues 99 to 108 (RRSEEGDGAR) and 132 to 157 (DSER…RDGA). A compositionally biased stretch (polar residues) spans 162–176 (WGTTQDDITPVTEES). 3 stretches are compositionally biased toward basic and acidic residues: residues 184-216 (LTVE…DKEM), 258-283 (SNND…EKTR), and 311-336 (REGR…RNQR). The FF domain occupies 223–288 (KVLEEKKKAL…EEKTRKSLSI (66 aa)). Residue serine 258 is modified to Phosphoserine.

Belongs to the SERBP1-HABP4 family.

Its subcellular location is the nucleus. The protein localises to the cytoplasm. The protein resides in the perinuclear region. In terms of biological role, ribosome-binding protein that acts as a regulator of mRNA translation by promoting ribosome inactivation. Binds RNA. This Arabidopsis thaliana (Mouse-ear cress) protein is RGG repeats nuclear RNA binding protein B.